The primary structure comprises 295 residues: Acetyl-coenzyme A carboxylase carboxyl transferase subunit beta (295 aa).

A disordered region spans residues 1-20 (MSWLSKLMPSGIRTENTPAK). In terms of domain architecture, CoA carboxyltransferase N-terminal spans 28-295 (LWEKCSNCGS…QPHPQDADAA (268 aa)). Positions 32, 35, 51, and 54 each coordinate Zn(2+). The C4-type zinc-finger motif lies at 32–54 (CSNCGSALYGPELEENLEVCPKC).

The protein belongs to the AccD/PCCB family. As to quaternary structure, acetyl-CoA carboxylase is a heterohexamer composed of biotin carboxyl carrier protein (AccB), biotin carboxylase (AccC) and two subunits each of ACCase subunit alpha (AccA) and ACCase subunit beta (AccD). Zn(2+) serves as cofactor.

It is found in the cytoplasm. It catalyses the reaction N(6)-carboxybiotinyl-L-lysyl-[protein] + acetyl-CoA = N(6)-biotinyl-L-lysyl-[protein] + malonyl-CoA. It participates in lipid metabolism; malonyl-CoA biosynthesis; malonyl-CoA from acetyl-CoA: step 1/1. Component of the acetyl coenzyme A carboxylase (ACC) complex. Biotin carboxylase (BC) catalyzes the carboxylation of biotin on its carrier protein (BCCP) and then the CO(2) group is transferred by the transcarboxylase to acetyl-CoA to form malonyl-CoA. The chain is Acetyl-coenzyme A carboxylase carboxyl transferase subunit beta from Xanthomonas euvesicatoria pv. vesicatoria (strain 85-10) (Xanthomonas campestris pv. vesicatoria).